The primary structure comprises 138 residues: Nucleoside diphosphate kinase (138 aa).

The ATP site is built by Lys-9, Phe-57, Arg-85, Thr-91, Arg-102, and Asn-112. His-120 serves as the catalytic Pros-phosphohistidine intermediate.

Belongs to the NDK family. Homotetramer. Mg(2+) is required as a cofactor.

The protein resides in the cytoplasm. It catalyses the reaction a 2'-deoxyribonucleoside 5'-diphosphate + ATP = a 2'-deoxyribonucleoside 5'-triphosphate + ADP. It carries out the reaction a ribonucleoside 5'-diphosphate + ATP = a ribonucleoside 5'-triphosphate + ADP. Its function is as follows. Major role in the synthesis of nucleoside triphosphates other than ATP. The ATP gamma phosphate is transferred to the NDP beta phosphate via a ping-pong mechanism, using a phosphorylated active-site intermediate. This is Nucleoside diphosphate kinase from Streptococcus agalactiae serotype III (strain NEM316).